Consider the following 122-residue polypeptide: UPF0102 protein VIBHAR_00890 (122 aa).

Belongs to the UPF0102 family.

This Vibrio campbellii (strain ATCC BAA-1116) protein is UPF0102 protein VIBHAR_00890.